A 294-amino-acid chain; its full sequence is 33 kDa chaperonin (294 aa).

Cystine bridges form between Cys236–Cys238 and Cys269–Cys272.

The protein belongs to the HSP33 family. In terms of processing, under oxidizing conditions two disulfide bonds are formed involving the reactive cysteines. Under reducing conditions zinc is bound to the reactive cysteines and the protein is inactive.

The protein resides in the cytoplasm. Functionally, redox regulated molecular chaperone. Protects both thermally unfolding and oxidatively damaged proteins from irreversible aggregation. Plays an important role in the bacterial defense system toward oxidative stress. The polypeptide is 33 kDa chaperonin (Desulfotalea psychrophila (strain LSv54 / DSM 12343)).